The following is a 65-amino-acid chain: MAIIKPHANKNRTTSPIERPESLIEEMSGSNPPIGFTSLDLAMIELEDFVHRCPLPGDNLAGQKE.

Forms heterodimers with virE2 that prevent virE2 anarchic homopolymerization and binding to DNA.

Functionally, involved in DNA transformation; controls virE2 polymerization and prevents virE2 binding to DNA. The polypeptide is Protein virE1 (virE1) (Rhizobium radiobacter (Agrobacterium tumefaciens)).